The primary structure comprises 511 residues: Maturase K (511 aa).

The protein belongs to the intron maturase 2 family. MatK subfamily.

It localises to the plastid. Its subcellular location is the chloroplast. Its function is as follows. Usually encoded in the trnK tRNA gene intron. Probably assists in splicing its own and other chloroplast group II introns. The protein is Maturase K of Poa pratensis (Kentucky bluegrass).